Consider the following 552-residue polypeptide: Glutamate--tRNA ligase (552 aa).

The 'HIGH' region signature appears at 102–112; that stretch reads PNPSGPLHIGH.

Belongs to the class-I aminoacyl-tRNA synthetase family. Glutamate--tRNA ligase type 2 subfamily.

The protein resides in the cytoplasm. The enzyme catalyses tRNA(Glu) + L-glutamate + ATP = L-glutamyl-tRNA(Glu) + AMP + diphosphate. In terms of biological role, catalyzes the attachment of glutamate to tRNA(Glu) in a two-step reaction: glutamate is first activated by ATP to form Glu-AMP and then transferred to the acceptor end of tRNA(Glu). The chain is Glutamate--tRNA ligase from Methanothermobacter marburgensis (strain ATCC BAA-927 / DSM 2133 / JCM 14651 / NBRC 100331 / OCM 82 / Marburg) (Methanobacterium thermoautotrophicum).